We begin with the raw amino-acid sequence, 177 residues long: Ferritin heavy chain, oocyte isoform (177 aa).

A Ferritin-like diiron domain is found at 7–156 (QNFHQECEAA…DHITNLRRMG (150 aa)). 5 residues coordinate Fe cation: E24, E59, H62, E104, and Q138.

Belongs to the ferritin family. In terms of assembly, oligomer of 24 subunits. There are two types of subunits: L (light) chain and H (heavy) chain. The functional molecule is roughly spherical and contains a central cavity into which the insoluble mineral iron core is deposited.

The protein localises to the cytoplasm. It catalyses the reaction 4 Fe(2+) + O2 + 4 H(+) = 4 Fe(3+) + 2 H2O. Functionally, stores iron in a soluble, non-toxic, readily available form. Important for iron homeostasis. Has ferroxidase activity. Iron is taken up in the ferrous form and deposited as ferric hydroxides after oxidation. The protein is Ferritin heavy chain, oocyte isoform of Xenopus laevis (African clawed frog).